The primary structure comprises 127 residues: Ribosome-binding factor A (127 aa).

This sequence belongs to the RbfA family. As to quaternary structure, monomer. Binds 30S ribosomal subunits, but not 50S ribosomal subunits or 70S ribosomes.

The protein localises to the cytoplasm. Functionally, one of several proteins that assist in the late maturation steps of the functional core of the 30S ribosomal subunit. Associates with free 30S ribosomal subunits (but not with 30S subunits that are part of 70S ribosomes or polysomes). Required for efficient processing of 16S rRNA. May interact with the 5'-terminal helix region of 16S rRNA. The chain is Ribosome-binding factor A from Chloroflexus aggregans (strain MD-66 / DSM 9485).